Here is a 224-residue protein sequence, read N- to C-terminus: RNA-free ribonuclease P (224 aa).

The protein belongs to the HARP family.

It catalyses the reaction Endonucleolytic cleavage of RNA, removing 5'-extranucleotides from tRNA precursor.. In terms of biological role, RNA-free RNase P that catalyzes the removal of the 5'-leader sequence from pre-tRNA to produce the mature 5'-terminus. The protein is RNA-free ribonuclease P of Haloarcula marismortui (strain ATCC 43049 / DSM 3752 / JCM 8966 / VKM B-1809) (Halobacterium marismortui).